The sequence spans 303 residues: MSQIDKMAKIKKLREISDAPFVDCKKALENSDYDIDLAINWLNKSGKSKALKKSDRIAAEGLVLAKKDPNSVLVFELNSETDFVAKNQNFINLQQKIGELLLANDFTNLEDALLIQDEAGRPISELLILATATIGEKITLRRVFKTKYSLEQSVEVYTHSNGQIAVITILKGGNLEIAKNISMHVAALNPQYILKIEVPNEKLQEIQLEVEKKAFAEVKNFEKKPENVKAGILKGMIDKQLSEFVLELQPLATDSAITVEKYLAQNSATLEKVVRFEVGEGIQKQNVDFSAEVNQQIQEFQKK.

Residues 81–84 (TDFV) are involved in Mg(2+) ion dislocation from EF-Tu.

It belongs to the EF-Ts family.

It is found in the cytoplasm. Its function is as follows. Associates with the EF-Tu.GDP complex and induces the exchange of GDP to GTP. It remains bound to the aminoacyl-tRNA.EF-Tu.GTP complex up to the GTP hydrolysis stage on the ribosome. The sequence is that of Elongation factor Ts from Mesomycoplasma hyopneumoniae (strain J / ATCC 25934 / NCTC 10110) (Mycoplasma hyopneumoniae).